The sequence spans 188 residues: MIEAAVSMSALGLGLGLLLGVAARRFHVESPPILDAIEGILPGTNCGACGYPGCRGLAEAMSEGAAPVTACAPGGRDVALALAAIVETDGGGGAVPGMAEAEPTVAFIFEDHCTGCMRCFKRCPTDAIIGANRQIHTVVTDACIGCNACIEACPTEAIVARVKPKTLKSWYWDKPRTAFEARDTEVAA.

Positions 1–23 are hydrophobic; that stretch reads MIEAAVSMSALGLGLGLLLGVAA. A 4Fe-4S domain is found at 29–88; the sequence is ESPPILDAIEGILPGTNCGACGYPGCRGLAEAMSEGAAPVTACAPGGRDVALALAAIVET. The [4Fe-4S] cluster site is built by C46, C49, C54, C71, C113, C116, C119, C123, C143, C146, C149, and C153. 2 consecutive 4Fe-4S ferredoxin-type domains span residues 104–133 and 134–163; these read TVAF…GANR and QIHT…ARVK.

The protein belongs to the 4Fe4S bacterial-type ferredoxin family. RnfB subfamily. In terms of assembly, the complex is composed of six subunits: RnfA, RnfB, RnfC, RnfD, RnfE and RnfG. [4Fe-4S] cluster is required as a cofactor.

It localises to the cellular chromatophore membrane. In terms of biological role, part of a membrane-bound complex that couples electron transfer with translocation of ions across the membrane. This is Ion-translocating oxidoreductase complex subunit B from Cereibacter sphaeroides (strain ATCC 17029 / ATH 2.4.9) (Rhodobacter sphaeroides).